A 270-amino-acid polypeptide reads, in one-letter code: Dihydroorotate dehydrogenase B (NAD(+)), catalytic subunit (270 aa).

FMN contacts are provided by residues serine 12 and 35–36; that span reads KT. Residues lysine 35, 59–63, and asparagine 114 each bind substrate; that span reads NRIGL. Residue asparagine 114 participates in FMN binding. Residue cysteine 117 is the Nucleophile of the active site. Residues lysine 153 and valine 179 each contribute to the FMN site. A substrate-binding site is contributed by 180-181; sequence NT. FMN-binding positions include glycine 199, 226–227, and 248–249; these read GG and GS.

It belongs to the dihydroorotate dehydrogenase family. Type 1 subfamily. In terms of assembly, heterotetramer of 2 PyrK and 2 PyrD type B subunits. Requires FMN as cofactor.

The protein resides in the cytoplasm. It carries out the reaction (S)-dihydroorotate + NAD(+) = orotate + NADH + H(+). Its pathway is pyrimidine metabolism; UMP biosynthesis via de novo pathway; orotate from (S)-dihydroorotate (NAD(+) route): step 1/1. Catalyzes the conversion of dihydroorotate to orotate with NAD(+) as electron acceptor. The polypeptide is Dihydroorotate dehydrogenase B (NAD(+)), catalytic subunit (pyrD) (Thermotoga maritima (strain ATCC 43589 / DSM 3109 / JCM 10099 / NBRC 100826 / MSB8)).